Consider the following 435-residue polypeptide: MTTETLDKPIKSAGYFTDGVAIVDPAVAAAMTRELEREQYQIELIASENIVSRAVLEAQGSVFTNKYAEGYPGRRYYQGCAPSDEVEQLAIDRAKQLFDCGYANVQPHSGAQANGAVMLALTKPGATILGMSLDAGGHLTHGAPPAMSGKWFNAVQYGVRADDHLVDFDQVEALAREHRPALIIAGGSAYPRTLDFARFRAIADDVGALLMVDMAHFAGLVAGGAHPSPMQYAHVVTTTTHKTLRGPRGGMILTNDEAIAKRINSAVFPGLQGGPLMHVIAAKAVAFGEALRPEFKDYAKATIANAQALANRLKARGADIVAGGTDTHLALIDLRPLGITGRDADEALERSAITCNKNGVPFDPLPPVKTSGIRVGSPAGTTRGFGIAEFEAIGDMVADVLDALRDKGEHGDADVEADVRGRVRALCERFPIYQG.

Residues Leu133 and 137–139 (GHL) contribute to the (6S)-5,6,7,8-tetrahydrofolate site. At Lys242 the chain carries N6-(pyridoxal phosphate)lysine.

It belongs to the SHMT family. As to quaternary structure, homodimer. Requires pyridoxal 5'-phosphate as cofactor.

It is found in the cytoplasm. It catalyses the reaction (6R)-5,10-methylene-5,6,7,8-tetrahydrofolate + glycine + H2O = (6S)-5,6,7,8-tetrahydrofolate + L-serine. It participates in one-carbon metabolism; tetrahydrofolate interconversion. The protein operates within amino-acid biosynthesis; glycine biosynthesis; glycine from L-serine: step 1/1. Its function is as follows. Catalyzes the reversible interconversion of serine and glycine with tetrahydrofolate (THF) serving as the one-carbon carrier. This reaction serves as the major source of one-carbon groups required for the biosynthesis of purines, thymidylate, methionine, and other important biomolecules. Also exhibits THF-independent aldolase activity toward beta-hydroxyamino acids, producing glycine and aldehydes, via a retro-aldol mechanism. The protein is Serine hydroxymethyltransferase of Sphingopyxis alaskensis (strain DSM 13593 / LMG 18877 / RB2256) (Sphingomonas alaskensis).